Reading from the N-terminus, the 186-residue chain is Large ribosomal subunit protein bL12c (186 aa).

The span at 1–11 (MASTLSTITLR) shows a compositional bias: polar residues. Disordered stretches follow at residues 1–23 (MAST…STHA) and 162–186 (EGVS…VSIA). Residues 1–53 (MASTLSTITLRSPSPSTASSTHASIPFPKKALEFPIRTPKLHHRRATFLRPLA) constitute a chloroplast transit peptide. The segment covering 12–23 (SPSPSTASSTHA) has biased composition (low complexity). Over residues 162–180 (EGVSKDEAEDAKKQLEEAG) the composition is skewed to basic and acidic residues.

It belongs to the bacterial ribosomal protein bL12 family.

It is found in the plastid. The protein resides in the chloroplast. In Nicotiana tabacum (Common tobacco), this protein is Large ribosomal subunit protein bL12c (RPL12).